Reading from the N-terminus, the 563-residue chain is Serine carboxypeptidase S10 family member 2 (563 aa).

The first 23 residues, 1–23 (MNIKIILLSIILIIQLLLLNNNG), serve as a signal peptide directing secretion. Topologically, residues 24–529 (GIVESKINFS…VPLTLGAWIG (506 aa)) are extracellular. 4 N-linked (GlcNAc...) asparagine glycosylation sites follow: Asn-31, Asn-95, Asn-110, and Asn-213. The active site involves Ser-225. Asn-244, Asn-328, and Asn-382 each carry an N-linked (GlcNAc...) asparagine glycan. Asp-417 is an active-site residue. Asn-468 carries N-linked (GlcNAc...) asparagine glycosylation. His-479 is a catalytic residue. Asn-499 is a glycosylation site (N-linked (GlcNAc...) asparagine). A helical transmembrane segment spans residues 530 to 550 (ITVGGCAFGFLVGGLIIYIIM). At 551-563 (KKSSKNGYYKVIQ) the chain is on the cytoplasmic side.

The protein belongs to the peptidase S10 family.

The protein localises to the membrane. In terms of biological role, probable carboxypeptidase. The chain is Serine carboxypeptidase S10 family member 2 from Dictyostelium discoideum (Social amoeba).